The chain runs to 741 residues: Eukaryotic translation initiation factor 3 subunit B (741 aa).

Over residues 1–10 (MAPSFDTLSE) the composition is skewed to polar residues. Residues 1 to 22 (MAPSFDTLSEQDLHEEEEEEID) form a disordered region. The segment covering 13-22 (LHEEEEEEID) has biased composition (acidic residues). The 87-residue stretch at 40–126 (TFVVIDGLPV…HTLLVNKLMD (87 aa)) folds into the RRM domain. 5 WD repeats span residues 193–230 (AHWT…KQKQ), 232–289 (PHPF…RSFV), 303–344 (QPKK…LLGK), 514–557 (IEKK…EKPE), and 572–610 (LEHY…HTFS). Residues 695 to 722 (KDAYGLPEDVDDPKKAKDAPAVTSEQGE) are disordered.

Belongs to the eIF-3 subunit B family. Component of the eukaryotic translation initiation factor 3 (eIF-3) complex.

It localises to the cytoplasm. RNA-binding component of the eukaryotic translation initiation factor 3 (eIF-3) complex, which is involved in protein synthesis of a specialized repertoire of mRNAs and, together with other initiation factors, stimulates binding of mRNA and methionyl-tRNAi to the 40S ribosome. The eIF-3 complex specifically targets and initiates translation of a subset of mRNAs involved in cell proliferation. The protein is Eukaryotic translation initiation factor 3 subunit B (prt1) of Aspergillus clavatus (strain ATCC 1007 / CBS 513.65 / DSM 816 / NCTC 3887 / NRRL 1 / QM 1276 / 107).